We begin with the raw amino-acid sequence, 647 residues long: Beta-glucosidase-like SFR2, chloroplastic (647 aa).

Residues 116–140 form a disordered region; the sequence is SAAGDGGSQQSWRSTGGENIGDREQ. Positions 123–132 are enriched in polar residues; it reads SQQSWRSTGG. Residue Asn-169 is glycosylated (N-linked (GlcNAc...) asparagine). A beta-D-glucoside-binding positions include His-258, 302–303, Tyr-414, Glu-466, Trp-504, 511–512, and Phe-520; these read NE and EW. The active-site Proton donor is Glu-303. The Nucleophile role is filled by Glu-466.

This sequence belongs to the glycosyl hydrolase 1 family.

It localises to the plastid. The protein resides in the chloroplast outer membrane. The enzyme catalyses 2 a 1,2-diacyl-3-O-(beta-D-galactosyl)-sn-glycerol = a 1,2-diacyl-3-O-[beta-D-galactosyl-(1-&gt;6)-beta-D-galactosyl]-sn-glycerol + a 1,2-diacyl-sn-glycerol. Its function is as follows. Galactosyltransferase synthesizing digalactosyldiacylglycerol from monogalactosyldiacylglycerol in the absence of UDP-galactose. Potentially involved in freezing tolerance. The polypeptide is Beta-glucosidase-like SFR2, chloroplastic (Oryza sativa subsp. japonica (Rice)).